A 500-amino-acid polypeptide reads, in one-letter code: Intermediate filament protein ifc-1 (500 aa).

A head region spans residues 1-36; that stretch reads MSLYGGIPTNLVSGMSSAGAICTTQIRDAREREKRE. The 351-residue stretch at 33–383 folds into the IF rod domain; the sequence is EKREIGLLND…VLLNGANVTT (351 aa). The tract at residues 37–68 is coil 1A; the sequence is IGLLNDRLADYIEKVRFLKAQNHVLSHDIEIL. The linker 1 stretch occupies residues 69 to 81; it reads RRGFSGGGHISSF. The segment at 82 to 219 is coil 1B; sequence FESEISNCTV…TENSSRIEQE (138 aa). Residues 220–237 form a linker 12 region; the sequence is LIYIHRDTTLENRDYFRQ. The segment at 238–383 is coil 2; that stretch reads ELQAAMRDIR…VLLNGANVTT (146 aa). The tract at residues 384-496 is tail; the sequence is YVSNSTGAAG…RHHESSYSYS (113 aa).

The protein belongs to the intermediate filament family.

It localises to the cytoplasm. Cytoplasmic intermediate filaments provide mechanical strength to cells. Not essential protein. This is Intermediate filament protein ifc-1 (ifc-1) from Caenorhabditis elegans.